Here is a 147-residue protein sequence, read N- to C-terminus: Large ribosomal subunit protein bL9 (147 aa).

It belongs to the bacterial ribosomal protein bL9 family.

Its function is as follows. Binds to the 23S rRNA. This chain is Large ribosomal subunit protein bL9, found in Clostridium novyi (strain NT).